The primary structure comprises 146 residues: Ribonuclease H (146 aa).

The 142-residue stretch at 4–145 (ELNKVVVYTD…ADMLARSQIV (142 aa)) folds into the RNase H type-1 domain. Mg(2+)-binding residues include aspartate 13, glutamate 51, aspartate 73, and aspartate 137.

This sequence belongs to the RNase H family. As to quaternary structure, monomer. Mg(2+) is required as a cofactor.

It localises to the cytoplasm. The catalysed reaction is Endonucleolytic cleavage to 5'-phosphomonoester.. Endonuclease that specifically degrades the RNA of RNA-DNA hybrids. This Ehrlichia ruminantium (strain Gardel) protein is Ribonuclease H.